Here is a 238-residue protein sequence, read N- to C-terminus: ATP synthase subunit a (238 aa).

Helical transmembrane passes span 18-38, 76-96, 117-137, 173-193, and 208-230; these read GTTMITTTIAMAIVVIITVIG, FIVLAYALLFYVFVANMMGIP, VLTLTMAVFIVVLTHIYGIMV, LFGNIYAKEILMLLLVSLGTT, and WQAFSIFIGSLQAYIFAMLAMVY.

This sequence belongs to the ATPase A chain family. As to quaternary structure, F-type ATPases have 2 components, CF(1) - the catalytic core - and CF(0) - the membrane proton channel. CF(1) has five subunits: alpha(3), beta(3), gamma(1), delta(1), epsilon(1). CF(0) has three main subunits: a(1), b(2) and c(9-12). The alpha and beta chains form an alternating ring which encloses part of the gamma chain. CF(1) is attached to CF(0) by a central stalk formed by the gamma and epsilon chains, while a peripheral stalk is formed by the delta and b chains.

Its subcellular location is the cell membrane. Functionally, key component of the proton channel; it plays a direct role in the translocation of protons across the membrane. The chain is ATP synthase subunit a from Shouchella clausii (strain KSM-K16) (Alkalihalobacillus clausii).